Consider the following 121-residue polypeptide: Large ribosomal subunit protein uL22 (121 aa).

It belongs to the universal ribosomal protein uL22 family. As to quaternary structure, part of the 50S ribosomal subunit.

This protein binds specifically to 23S rRNA; its binding is stimulated by other ribosomal proteins, e.g. L4, L17, and L20. It is important during the early stages of 50S assembly. It makes multiple contacts with different domains of the 23S rRNA in the assembled 50S subunit and ribosome. Its function is as follows. The globular domain of the protein is located near the polypeptide exit tunnel on the outside of the subunit, while an extended beta-hairpin is found that lines the wall of the exit tunnel in the center of the 70S ribosome. The chain is Large ribosomal subunit protein uL22 from Pseudarthrobacter chlorophenolicus (strain ATCC 700700 / DSM 12829 / CIP 107037 / JCM 12360 / KCTC 9906 / NCIMB 13794 / A6) (Arthrobacter chlorophenolicus).